The primary structure comprises 184 residues: NADH-quinone oxidoreductase subunit B (184 aa).

4 residues coordinate [4Fe-4S] cluster: Cys37, Cys38, Cys103, and Cys132.

This sequence belongs to the complex I 20 kDa subunit family. NDH-1 is composed of 14 different subunits. Subunits NuoB, C, D, E, F, and G constitute the peripheral sector of the complex. The cofactor is [4Fe-4S] cluster.

The protein resides in the cell membrane. It carries out the reaction a quinone + NADH + 5 H(+)(in) = a quinol + NAD(+) + 4 H(+)(out). Its function is as follows. NDH-1 shuttles electrons from NADH, via FMN and iron-sulfur (Fe-S) centers, to quinones in the respiratory chain. The immediate electron acceptor for the enzyme in this species is believed to be a menaquinone. Couples the redox reaction to proton translocation (for every two electrons transferred, four hydrogen ions are translocated across the cytoplasmic membrane), and thus conserves the redox energy in a proton gradient. This Rhodococcus erythropolis (strain PR4 / NBRC 100887) protein is NADH-quinone oxidoreductase subunit B.